The sequence spans 139 residues: Small ribosomal subunit protein eS12 (139 aa).

The protein belongs to the eukaryotic ribosomal protein eS12 family. As to quaternary structure, subunit of the 40S ribosomal complex. Part of the small subunit (SSU) processome, composed of more than 70 proteins and the RNA chaperone small nucleolar RNA (snoRNA) U3.

The protein resides in the nucleus. Its subcellular location is the nucleolus. Subunit of the 40S ribosomal complex. Part of the small subunit (SSU) processome, first precursor of the small eukaryotic ribosomal subunit. During the assembly of the SSU processome in the nucleolus, many ribosome biogenesis factors, an RNA chaperone and ribosomal proteins associate with the nascent pre-rRNA and work in concert to generate RNA folding, modifications, rearrangements and cleavage as well as targeted degradation of pre-ribosomal RNA by the RNA exosome. In wing imaginal disks, might have a role in translation rate, growth and cell competition, probably through regulation of Xrp1 expression. Might have a role in development and longevity. The protein is Small ribosomal subunit protein eS12 of Drosophila melanogaster (Fruit fly).